Reading from the N-terminus, the 470-residue chain is Protein escargot (470 aa).

Positions 271–309 (LNLNTSQPGEQAAAKTGDMSPETMPNASAKKDKNQPPRY) are disordered. C2H2-type zinc fingers lie at residues 309-331 (YQCP…QQFH), 344-366 (FSCK…IRTH), 370-392 (CKCN…IRTH), and 398-420 (FSCQ…LQTH). The C2H2-type 5; atypical zinc-finger motif lies at 426–449 (YSCTSCSKTFSRMSLLTKHSEGGC). Residues 448–470 (GCPGGSAGSSSSSELNYAGYAEP) are disordered.

This sequence belongs to the snail C2H2-type zinc-finger protein family. In terms of tissue distribution, expression is complex and dynamic. In early embryogenesis, expression begins on the dorsal side of the embryo. Expressed in a pattern of longitudinal stripes early in germband elongation. Later in embryogenesis, expression is in cells that correspond to the wing, haltere, leg and genital imaginal disks and the abdominal histoblasts. In the embryonic leg disk, expression is restricted to imaginal cells. Also expressed in the central nervous system (CNS), tracheae and head of stage 14 embryos. CNS and tracheal expression decays during later stages, though head expression persists until late in embryogenesis. In third instar larvae, expression is seen in the brain and in regions of many imaginal tissues including the eye-antennal, wing, leg and haltere disks. Expressed in embryonic, larval and adult male germline stem cells and in the somatic cells of the embryonic gonads.

The protein localises to the nucleus. Functionally, transcription factor that can both stimulate and repress transcription. Binds to the consensus DNA sequence 5'-A/GCAGGTG-3'. Regulates cell motility and adhesion during tracheal morphogenesis by stimulating transcription of the DE-cadherin gene shg at branch tips, thereby promoting tracheal tube fusion. Maintains diploidy in imaginal cells by inhibiting the transcription of genes required for endoreplication. Required for development of the genital disk and acts as an intrinsic determinant of wing cell fate. The somatic protein is required for maintenance of male germ cells. Acts with other members of the snail protein family to control embryonic central nervous system development. This Drosophila melanogaster (Fruit fly) protein is Protein escargot (esg).